The sequence spans 125 residues: U-scoloptoxin(05)-Sm1a (125 aa).

A signal peptide spans 1–20 (MNVLYTKIFFILILTRTSSA).

It belongs to the scoloptoxin-05 family. Contains 4 disulfide bonds. As to expression, expressed by the venom gland.

Its subcellular location is the secreted. This chain is U-scoloptoxin(05)-Sm1a, found in Scolopendra morsitans (Tanzanian blue ringleg centipede).